A 156-amino-acid chain; its full sequence is Movement protein P17 (156 aa).

The segment at A38–F54 is homodimerization. Disordered regions lie at residues P55 to P80 and A131 to G156. The tract at residues D57–G156 is RNA-binding. Phosphoserine occurs at positions 71, 79, 137, and 140. The segment covering K144 to G156 has biased composition (basic residues).

This sequence belongs to the polerovirus movement protein family. In terms of assembly, homodimer. Heterodimer with movement protein P3a. Expressed as a nonphosphorylated 20kDa form and a phosphorylated 22kDa form. Phosphorylated by a host PKC-related kinase. Serine phosphorylation is required for plamodesma targeting.

It is found in the host cell junction. It localises to the host plasmodesma. The protein resides in the host mitochondrion outer membrane. The protein localises to the host Golgi apparatus. Its subcellular location is the host chloroplast envelope. Together with movement protein P3a, facilitates long-distance movement of virions in host. Transports viral genome to neighboring plant cells directly through plasmosdesmata, without any budding. The movement protein allows efficient cell to cell propagation, by bypassing the host cell wall barrier. Binds ssRNA. This Solanum tuberosum (Potato) protein is Movement protein P17.